We begin with the raw amino-acid sequence, 155 residues long: 6,7-dimethyl-8-ribityllumazine synthase (155 aa).

5-amino-6-(D-ribitylamino)uracil-binding positions include F24, 58 to 60 (AFE), and 82 to 84 (AII). 87–88 (ST) serves as a coordination point for (2S)-2-hydroxy-3-oxobutyl phosphate. Catalysis depends on H90, which acts as the Proton donor. F115 provides a ligand contact to 5-amino-6-(D-ribitylamino)uracil. R129 serves as a coordination point for (2S)-2-hydroxy-3-oxobutyl phosphate.

The protein belongs to the DMRL synthase family.

It carries out the reaction (2S)-2-hydroxy-3-oxobutyl phosphate + 5-amino-6-(D-ribitylamino)uracil = 6,7-dimethyl-8-(1-D-ribityl)lumazine + phosphate + 2 H2O + H(+). The protein operates within cofactor biosynthesis; riboflavin biosynthesis; riboflavin from 2-hydroxy-3-oxobutyl phosphate and 5-amino-6-(D-ribitylamino)uracil: step 1/2. Catalyzes the formation of 6,7-dimethyl-8-ribityllumazine by condensation of 5-amino-6-(D-ribitylamino)uracil with 3,4-dihydroxy-2-butanone 4-phosphate. This is the penultimate step in the biosynthesis of riboflavin. The sequence is that of 6,7-dimethyl-8-ribityllumazine synthase from Chlorobium luteolum (strain DSM 273 / BCRC 81028 / 2530) (Pelodictyon luteolum).